The chain runs to 129 residues: Small ribosomal subunit protein uS11 (129 aa).

This sequence belongs to the universal ribosomal protein uS11 family. As to quaternary structure, part of the 30S ribosomal subunit. Interacts with proteins S7 and S18. Binds to IF-3.

Located on the platform of the 30S subunit, it bridges several disparate RNA helices of the 16S rRNA. Forms part of the Shine-Dalgarno cleft in the 70S ribosome. In Phocaeicola vulgatus (strain ATCC 8482 / DSM 1447 / JCM 5826 / CCUG 4940 / NBRC 14291 / NCTC 11154) (Bacteroides vulgatus), this protein is Small ribosomal subunit protein uS11.